The sequence spans 449 residues: Exodeoxyribonuclease 7 large subunit (449 aa).

This sequence belongs to the XseA family. As to quaternary structure, heterooligomer composed of large and small subunits.

The protein localises to the cytoplasm. The catalysed reaction is Exonucleolytic cleavage in either 5'- to 3'- or 3'- to 5'-direction to yield nucleoside 5'-phosphates.. Its function is as follows. Bidirectionally degrades single-stranded DNA into large acid-insoluble oligonucleotides, which are then degraded further into small acid-soluble oligonucleotides. The chain is Exodeoxyribonuclease 7 large subunit from Salmonella agona (strain SL483).